Here is a 91-residue protein sequence, read N- to C-terminus: YcgL domain-containing protein ETA_15380 (91 aa).

Positions 1–85 constitute a YcgL domain; it reads MFCVIYRSPQ…PLESLLKIHL (85 aa).

This Erwinia tasmaniensis (strain DSM 17950 / CFBP 7177 / CIP 109463 / NCPPB 4357 / Et1/99) protein is YcgL domain-containing protein ETA_15380.